A 517-amino-acid chain; its full sequence is Protein disulfide-isomerase A5 (517 aa).

Positions Met-1–Ser-21 are cleaved as a signal peptide. Cystine bridges form between Cys-83/Cys-92, Cys-180/Cys-183, Cys-303/Cys-306, and Cys-424/Cys-427. Thioredoxin domains lie at Phe-132–Pro-259, Pro-268–Ala-382, and Trp-376–Glu-504. The Prevents secretion from ER signature appears at Arg-514–Leu-517.

It belongs to the protein disulfide isomerase family. Interacts with CALR (via P-domain).

Its subcellular location is the endoplasmic reticulum lumen. The enzyme catalyses Catalyzes the rearrangement of -S-S- bonds in proteins.. This chain is Protein disulfide-isomerase A5 (Pdia5), found in Mus musculus (Mouse).